The chain runs to 269 residues: Mitochondrial genome maintenance protein MGM101 (269 aa).

A mitochondrion-targeting transit peptide spans 1 to 30 (MKSIFKVRGCVSHAAQFCQKRTVVSTGTSN).

This sequence belongs to the MGM101 family.

It is found in the mitochondrion matrix. The protein localises to the mitochondrion nucleoid. Its function is as follows. Performs an essential function in the repair of oxidatively damaged mtDNA that is required for the maintenance of the mitochondrial genome. Binds to DNA. The polypeptide is Mitochondrial genome maintenance protein MGM101 (MGM101) (Saccharomyces cerevisiae (strain ATCC 204508 / S288c) (Baker's yeast)).